We begin with the raw amino-acid sequence, 162 residues long: N5-carboxyaminoimidazole ribonucleotide mutase (162 aa).

Positions 11, 14, and 41 each coordinate substrate.

It belongs to the AIR carboxylase family. Class I subfamily.

The catalysed reaction is 5-carboxyamino-1-(5-phospho-D-ribosyl)imidazole + H(+) = 5-amino-1-(5-phospho-D-ribosyl)imidazole-4-carboxylate. It participates in purine metabolism; IMP biosynthesis via de novo pathway; 5-amino-1-(5-phospho-D-ribosyl)imidazole-4-carboxylate from 5-amino-1-(5-phospho-D-ribosyl)imidazole (N5-CAIR route): step 2/2. Functionally, catalyzes the conversion of N5-carboxyaminoimidazole ribonucleotide (N5-CAIR) to 4-carboxy-5-aminoimidazole ribonucleotide (CAIR). The protein is N5-carboxyaminoimidazole ribonucleotide mutase of Brucella melitensis biotype 1 (strain ATCC 23456 / CCUG 17765 / NCTC 10094 / 16M).